The following is a 247-amino-acid chain: Spermatogenesis-associated protein 46 (247 aa).

Positions 125–164 (QRDSCLPEDTADSVCSSSPSPENTCPREATKKSRPGPDTT) are disordered. Polar residues predominate over residues 137–147 (SVCSSSPSPEN).

The protein localises to the nucleus membrane. In terms of biological role, plays a role in spermiogenesis and fertilization. The chain is Spermatogenesis-associated protein 46 (SPATA46) from Bos taurus (Bovine).